A 117-amino-acid polypeptide reads, in one-letter code: MSAAPTTAPVAAVSKKGKKSGDTINSKLALTMKSGKYVLGYKSTLKTLRSGKAKLILIAANAPPLRKSELEYYAMLSRCSVHHYSGNNIDLGTACGKLFRVGVLAVIDAGDSDILAA.

Residues 1 to 14 show a composition bias toward low complexity; the sequence is MSAAPTTAPVAAVS. The tract at residues 1–22 is disordered; sequence MSAAPTTAPVAAVSKKGKKSGD.

It belongs to the eukaryotic ribosomal protein eL30 family. Component of the large ribosomal subunit (LSU). Mature yeast ribosomes consist of a small (40S) and a large (60S) subunit. The 40S small subunit contains 1 molecule of ribosomal RNA (18S rRNA) and at least 33 different proteins. The large 60S subunit contains 3 rRNA molecules (25S, 5.8S and 5S rRNA) and at least 46 different proteins.

The protein resides in the cytoplasm. Component of the ribosome, a large ribonucleoprotein complex responsible for the synthesis of proteins in the cell. The small ribosomal subunit (SSU) binds messenger RNAs (mRNAs) and translates the encoded message by selecting cognate aminoacyl-transfer RNA (tRNA) molecules. The large subunit (LSU) contains the ribosomal catalytic site termed the peptidyl transferase center (PTC), which catalyzes the formation of peptide bonds, thereby polymerizing the amino acids delivered by tRNAs into a polypeptide chain. The nascent polypeptides leave the ribosome through a tunnel in the LSU and interact with protein factors that function in enzymatic processing, targeting, and the membrane insertion of nascent chains at the exit of the ribosomal tunnel. The sequence is that of Large ribosomal subunit protein eL30B (rpl3002) from Schizosaccharomyces pombe (strain 972 / ATCC 24843) (Fission yeast).